Reading from the N-terminus, the 160-residue chain is Probable NADH dehydrogenase [ubiquinone] 1 beta subcomplex subunit 2, mitochondrial (160 aa).

The protein belongs to the complex I NDUFB2 subunit family. Complex I is composed of 45 different subunits.

The protein resides in the mitochondrion inner membrane. Functionally, accessory subunit of the mitochondrial membrane respiratory chain NADH dehydrogenase (Complex I), that is believed not to be involved in catalysis. Complex I functions in the transfer of electrons from NADH to the respiratory chain. The immediate electron acceptor for the enzyme is believed to be ubiquinone. The polypeptide is Probable NADH dehydrogenase [ubiquinone] 1 beta subcomplex subunit 2, mitochondrial (Caenorhabditis briggsae).